Reading from the N-terminus, the 805-residue chain is Leucine--tRNA ligase (805 aa).

The 'HIGH' region motif lies at 40-51 (PYPSGAGLHVGH). The 'KMSKS' region motif lies at 576-580 (KMSKS). Lys579 serves as a coordination point for ATP.

The protein belongs to the class-I aminoacyl-tRNA synthetase family.

It is found in the cytoplasm. The enzyme catalyses tRNA(Leu) + L-leucine + ATP = L-leucyl-tRNA(Leu) + AMP + diphosphate. The chain is Leucine--tRNA ligase from Geobacillus kaustophilus (strain HTA426).